The primary structure comprises 520 residues: Poly(A)-specific ribonuclease PNLDC1 (520 aa).

4 residues coordinate Mg(2+): aspartate 17, glutamate 19, aspartate 260, and aspartate 354. A helical membrane pass occupies residues 497–513; it reads CLLQVCGIVTAWALLAF.

It belongs to the CAF1 family. The cofactor is Mg(2+).

It is found in the endoplasmic reticulum membrane. It carries out the reaction Exonucleolytic cleavage of poly(A) to 5'-AMP.. In terms of biological role, 3'-exoribonuclease that has a preference for poly(A) tails of mRNAs, thereby efficiently degrading poly(A) tails. Exonucleolytic degradation of the poly(A) tail is often the first step in the decay of eukaryotic mRNAs and is also used to silence certain maternal mRNAs translationally during oocyte maturation and early embryonic development. May act as a regulator of multipotency in embryonic stem cells. Is a critical factor for proper spermatogenesis, involved in pre-piRNAs processing to generate mature piRNAs. The sequence is that of Poly(A)-specific ribonuclease PNLDC1 from Pongo abelii (Sumatran orangutan).